Here is a 284-residue protein sequence, read N- to C-terminus: Polyamine aminopropyltransferase (284 aa).

One can recognise a PABS domain in the interval 2 to 237 (ELWYTEQHTE…GHWLFGFASK (236 aa)). Glutamine 31 contributes to the S-methyl-5'-thioadenosine binding site. Residues histidine 62 and aspartate 86 each coordinate spermidine. S-methyl-5'-thioadenosine contacts are provided by residues glutamate 106 and 137–138 (DG). The Proton acceptor role is filled by aspartate 155. Residue 155–158 (DSTD) coordinates spermidine. Proline 162 serves as a coordination point for S-methyl-5'-thioadenosine.

It belongs to the spermidine/spermine synthase family. Homodimer or homotetramer.

It localises to the cytoplasm. It catalyses the reaction S-adenosyl 3-(methylsulfanyl)propylamine + putrescine = S-methyl-5'-thioadenosine + spermidine + H(+). It participates in amine and polyamine biosynthesis; spermidine biosynthesis; spermidine from putrescine: step 1/1. Functionally, catalyzes the irreversible transfer of a propylamine group from the amino donor S-adenosylmethioninamine (decarboxy-AdoMet) to putrescine (1,4-diaminobutane) to yield spermidine. The chain is Polyamine aminopropyltransferase from Clostridium beijerinckii (strain ATCC 51743 / NCIMB 8052) (Clostridium acetobutylicum).